The following is a 305-amino-acid chain: UDP-3-O-acyl-N-acetylglucosamine deacetylase (305 aa).

Zn(2+) is bound by residues histidine 78, histidine 235, and aspartate 239. The active-site Proton donor is histidine 262.

Belongs to the LpxC family. Zn(2+) serves as cofactor.

It carries out the reaction a UDP-3-O-[(3R)-3-hydroxyacyl]-N-acetyl-alpha-D-glucosamine + H2O = a UDP-3-O-[(3R)-3-hydroxyacyl]-alpha-D-glucosamine + acetate. It functions in the pathway glycolipid biosynthesis; lipid IV(A) biosynthesis; lipid IV(A) from (3R)-3-hydroxytetradecanoyl-[acyl-carrier-protein] and UDP-N-acetyl-alpha-D-glucosamine: step 2/6. In terms of biological role, catalyzes the hydrolysis of UDP-3-O-myristoyl-N-acetylglucosamine to form UDP-3-O-myristoylglucosamine and acetate, the committed step in lipid A biosynthesis. The polypeptide is UDP-3-O-acyl-N-acetylglucosamine deacetylase (Geobacter sp. (strain M21)).